We begin with the raw amino-acid sequence, 256 residues long: Isoprenyl transferase (256 aa).

Aspartate 33 is a catalytic residue. Position 33 (aspartate 33) interacts with Mg(2+). Substrate-binding positions include 34–37 (GNGR), tryptophan 38, arginine 46, histidine 50, and 78–80 (STE). The active-site Proton acceptor is the asparagine 81. Substrate is bound by residues tryptophan 82, arginine 84, arginine 201, and 207–209 (RIS). Residue glutamate 220 coordinates Mg(2+).

Belongs to the UPP synthase family. In terms of assembly, homodimer. Mg(2+) serves as cofactor.

Its function is as follows. Catalyzes the condensation of isopentenyl diphosphate (IPP) with allylic pyrophosphates generating different type of terpenoids. This chain is Isoprenyl transferase, found in Staphylococcus haemolyticus (strain JCSC1435).